The chain runs to 337 residues: Lipoyl synthase (337 aa).

The [4Fe-4S] cluster site is built by C81, C86, C92, C107, C111, C114, and S323. The region spanning 93-312 (FSHGTATFMI…EEYGNALGFS (220 aa)) is the Radical SAM core domain.

The protein belongs to the radical SAM superfamily. Lipoyl synthase family. Requires [4Fe-4S] cluster as cofactor.

It is found in the cytoplasm. The enzyme catalyses [[Fe-S] cluster scaffold protein carrying a second [4Fe-4S](2+) cluster] + N(6)-octanoyl-L-lysyl-[protein] + 2 oxidized [2Fe-2S]-[ferredoxin] + 2 S-adenosyl-L-methionine + 4 H(+) = [[Fe-S] cluster scaffold protein] + N(6)-[(R)-dihydrolipoyl]-L-lysyl-[protein] + 4 Fe(3+) + 2 hydrogen sulfide + 2 5'-deoxyadenosine + 2 L-methionine + 2 reduced [2Fe-2S]-[ferredoxin]. It participates in protein modification; protein lipoylation via endogenous pathway; protein N(6)-(lipoyl)lysine from octanoyl-[acyl-carrier-protein]: step 2/2. Catalyzes the radical-mediated insertion of two sulfur atoms into the C-6 and C-8 positions of the octanoyl moiety bound to the lipoyl domains of lipoate-dependent enzymes, thereby converting the octanoylated domains into lipoylated derivatives. The sequence is that of Lipoyl synthase from Xanthomonas campestris pv. campestris (strain 8004).